The following is a 520-amino-acid chain: Cytochrome P450 1A1 (520 aa).

Phe230 provides a ligand contact to substrate. Cys464 serves as a coordination point for heme.

Belongs to the cytochrome P450 family. Requires heme as cofactor.

It is found in the endoplasmic reticulum membrane. The protein resides in the microsome membrane. It catalyses the reaction an organic molecule + reduced [NADPH--hemoprotein reductase] + O2 = an alcohol + oxidized [NADPH--hemoprotein reductase] + H2O + H(+). Its function is as follows. Cytochromes P450 are a group of heme-thiolate monooxygenases. In liver microsomes, this enzyme is involved in an NADPH-dependent electron transport pathway. It oxidizes a variety of structurally unrelated compounds, including steroids, fatty acids, and xenobiotics. In Dicentrarchus labrax (European seabass), this protein is Cytochrome P450 1A1 (cyp1a1).